Consider the following 142-residue polypeptide: Large ribosomal subunit protein uL13 (142 aa).

It belongs to the universal ribosomal protein uL13 family. As to quaternary structure, part of the 50S ribosomal subunit.

Functionally, this protein is one of the early assembly proteins of the 50S ribosomal subunit, although it is not seen to bind rRNA by itself. It is important during the early stages of 50S assembly. In Klebsiella pneumoniae (strain 342), this protein is Large ribosomal subunit protein uL13.